The sequence spans 940 residues: Protein translocase subunit SecA 1 (940 aa).

ATP is bound by residues Q83, 101–105, and D490; that span reads GEGKT. The segment at 856–940 is disordered; the sequence is AEQGGTATAA…AKPPKSVKRR (85 aa).

Belongs to the SecA family. Monomer and homodimer. Part of the essential Sec protein translocation apparatus which comprises SecA, SecYEG and auxiliary proteins SecDF. Other proteins may also be involved.

It localises to the cell membrane. The protein localises to the cytoplasm. It carries out the reaction ATP + H2O + cellular proteinSide 1 = ADP + phosphate + cellular proteinSide 2.. Functionally, part of the Sec protein translocase complex. Interacts with the SecYEG preprotein conducting channel. Has a central role in coupling the hydrolysis of ATP to the transfer of proteins into and across the cell membrane, serving as an ATP-driven molecular motor driving the stepwise translocation of polypeptide chains across the membrane. The polypeptide is Protein translocase subunit SecA 1 (Mycolicibacterium paratuberculosis (strain ATCC BAA-968 / K-10) (Mycobacterium paratuberculosis)).